The sequence spans 298 residues: Lipoyl synthase (298 aa).

Residues Cys-40, Cys-45, Cys-51, Cys-67, Cys-71, Cys-74, and Ser-280 each coordinate [4Fe-4S] cluster. In terms of domain architecture, Radical SAM core spans 53 to 269 (AVRKTATFMI…KEIALSKGFS (217 aa)).

Belongs to the radical SAM superfamily. Lipoyl synthase family. [4Fe-4S] cluster is required as a cofactor.

It is found in the cytoplasm. It carries out the reaction [[Fe-S] cluster scaffold protein carrying a second [4Fe-4S](2+) cluster] + N(6)-octanoyl-L-lysyl-[protein] + 2 oxidized [2Fe-2S]-[ferredoxin] + 2 S-adenosyl-L-methionine + 4 H(+) = [[Fe-S] cluster scaffold protein] + N(6)-[(R)-dihydrolipoyl]-L-lysyl-[protein] + 4 Fe(3+) + 2 hydrogen sulfide + 2 5'-deoxyadenosine + 2 L-methionine + 2 reduced [2Fe-2S]-[ferredoxin]. It functions in the pathway protein modification; protein lipoylation via endogenous pathway; protein N(6)-(lipoyl)lysine from octanoyl-[acyl-carrier-protein]. Catalyzes the radical-mediated insertion of two sulfur atoms into the C-6 and C-8 positions of the octanoyl moiety bound to the lipoyl domains of lipoate-dependent enzymes, thereby converting the octanoylated domains into lipoylated derivatives. This Bacillus cereus (strain B4264) protein is Lipoyl synthase.